The following is a 715-amino-acid chain: ATP-dependent RNA helicase DBP7 (715 aa).

Disordered stretches follow at residues 1–82 and 94–121; these read MSDD…SKAD and FTSNRAKQTSENKNKHNSDDKVVPSNAP. 3 stretches are compositionally biased toward basic and acidic residues: residues 20–29, 40–73, and 101–115; these read RADKVTGGRW, GGREPVKRRAEGGDKERGDKRAKVDTGNAQEKKN, and QTSENKNKHNSDDKV. The short motif at 125–154 is the Q motif element; sequence DSFEGLGVGSLVVSHLENKMRIQKSTSIQK. Positions 160–354 constitute a Helicase ATP-binding domain; the sequence is ILQNADKTDF…KRSLDNYKVI (195 aa). 173–180 contacts ATP; the sequence is AQTGSGKT. Positions 289–292 match the DEAD box motif; sequence DEGD. One can recognise a Helicase C-terminal domain in the interval 400–586; it reads PLDAGSVAKR…VLIKAFNDID (187 aa). The tract at residues 668–698 is disordered; the sequence is DRPKAMGMNSSKDANGNERSKPKKENAKNKM. Residues 682 to 695 show a composition bias toward basic and acidic residues; the sequence is NGNERSKPKKENAK.

This sequence belongs to the DEAD box helicase family. DDX31/DBP7 subfamily.

It localises to the nucleus. The protein localises to the nucleolus. It carries out the reaction ATP + H2O = ADP + phosphate + H(+). Functionally, ATP-binding RNA helicase involved in the biogenesis of 60S ribosomal subunits and is required for the normal formation of 25S and 5.8S rRNAs. This chain is ATP-dependent RNA helicase DBP7 (DBP7), found in Candida glabrata (strain ATCC 2001 / BCRC 20586 / JCM 3761 / NBRC 0622 / NRRL Y-65 / CBS 138) (Yeast).